Here is a 225-residue protein sequence, read N- to C-terminus: Shikimate kinase (225 aa).

27 to 32 (GAGKTT) lines the ATP pocket. Thr31 contributes to the Mg(2+) binding site. The substrate site is built by Asp49, Arg73, and Gly95. Arg132 is an ATP binding site. A substrate-binding site is contributed by Arg150. Residues 186–225 (GGSEPDEAADAAGGSEPDEAADAAGGSEPDEAADAAGGKR) are disordered.

This sequence belongs to the shikimate kinase family. In terms of assembly, monomer. Mg(2+) is required as a cofactor.

It is found in the cytoplasm. The catalysed reaction is shikimate + ATP = 3-phosphoshikimate + ADP + H(+). Its pathway is metabolic intermediate biosynthesis; chorismate biosynthesis; chorismate from D-erythrose 4-phosphate and phosphoenolpyruvate: step 5/7. Functionally, catalyzes the specific phosphorylation of the 3-hydroxyl group of shikimic acid using ATP as a cosubstrate. This is Shikimate kinase from Frankia casuarinae (strain DSM 45818 / CECT 9043 / HFP020203 / CcI3).